The following is an 80-amino-acid chain: UPF0125 protein XF_2346 (80 aa).

This sequence belongs to the UPF0125 (RnfH) family.

This is UPF0125 protein XF_2346 from Xylella fastidiosa (strain 9a5c).